Reading from the N-terminus, the 385-residue chain is tRNA(Met) cytidine acetate ligase (385 aa).

ATP-binding positions include 7 to 20 (VAEY…HEFL), G101, N153, and R178.

This sequence belongs to the TmcAL family.

It is found in the cytoplasm. The enzyme catalyses cytidine(34) in elongator tRNA(Met) + acetate + ATP = N(4)-acetylcytidine(34) in elongator tRNA(Met) + AMP + diphosphate. Catalyzes the formation of N(4)-acetylcytidine (ac(4)C) at the wobble position of elongator tRNA(Met), using acetate and ATP as substrates. First activates an acetate ion to form acetyladenylate (Ac-AMP) and then transfers the acetyl group to tRNA to form ac(4)C34. This chain is tRNA(Met) cytidine acetate ligase, found in Lactobacillus gasseri (strain ATCC 33323 / DSM 20243 / BCRC 14619 / CIP 102991 / JCM 1131 / KCTC 3163 / NCIMB 11718 / NCTC 13722 / AM63).